The primary structure comprises 186 residues: Adenine phosphoribosyltransferase (186 aa).

Belongs to the purine/pyrimidine phosphoribosyltransferase family. In terms of assembly, homodimer.

The protein localises to the cytoplasm. It catalyses the reaction AMP + diphosphate = 5-phospho-alpha-D-ribose 1-diphosphate + adenine. It participates in purine metabolism; AMP biosynthesis via salvage pathway; AMP from adenine: step 1/1. Its function is as follows. Catalyzes a salvage reaction resulting in the formation of AMP, that is energically less costly than de novo synthesis. The protein is Adenine phosphoribosyltransferase of Xanthomonas campestris pv. campestris (strain B100).